A 75-amino-acid polypeptide reads, in one-letter code: Translational regulator CsrA (75 aa).

This sequence belongs to the CsrA/RsmA family. Homodimer; the beta-strands of each monomer intercalate to form a hydrophobic core, while the alpha-helices form wings that extend away from the core. Interacts with FliW.

Its subcellular location is the cytoplasm. Functionally, a translational regulator that binds mRNA to regulate translation initiation and/or mRNA stability. Usually binds in the 5'-UTR at or near the Shine-Dalgarno sequence preventing ribosome-binding, thus repressing translation. Its function is probably anatagonized by FliW. Inhibits translation of flaA mRNA in vitro. Involved in post-transcriptional regulation of flagellin biosynthesis. This is Translational regulator CsrA from Campylobacter jejuni subsp. jejuni serotype O:6 (strain 81116 / NCTC 11828).